A 120-amino-acid chain; its full sequence is Large ribosomal subunit protein bL19 (120 aa).

It belongs to the bacterial ribosomal protein bL19 family.

This protein is located at the 30S-50S ribosomal subunit interface and may play a role in the structure and function of the aminoacyl-tRNA binding site. The polypeptide is Large ribosomal subunit protein bL19 (Picosynechococcus sp. (strain ATCC 27264 / PCC 7002 / PR-6) (Agmenellum quadruplicatum)).